A 500-amino-acid chain; its full sequence is NAD(P)H-quinone oxidoreductase chain 4, chloroplastic (500 aa).

Helical transmembrane passes span 4-24 (FPWL…IFFL), 31-51 (VIFW…TYAF), 84-104 (GLSI…TLAA), 111-131 (ARLF…LFSC), 134-154 (LLLF…LLSM), 167-187 (FILY…GIGL), 212-232 (IFYI…PLHT), 242-262 (HYST…YGLV), 272-292 (AHSL…IYAA), 308-328 (SSVS…DIGL), 330-350 (GALL…FLAG), 386-406 (LALP…GLIT), 411-431 (LLMA…LTPI), and 462-482 (LFLS…PDFV).

The protein belongs to the complex I subunit 4 family.

The protein resides in the plastid. The protein localises to the chloroplast thylakoid membrane. It carries out the reaction a plastoquinone + NADH + (n+1) H(+)(in) = a plastoquinol + NAD(+) + n H(+)(out). The catalysed reaction is a plastoquinone + NADPH + (n+1) H(+)(in) = a plastoquinol + NADP(+) + n H(+)(out). The sequence is that of NAD(P)H-quinone oxidoreductase chain 4, chloroplastic from Jasminum nudiflorum (Winter jasmine).